The following is a 298-amino-acid chain: Enoyl-CoA hydratase AKT6-1 (298 aa).

The interval 1–23 (MTFSTTKSVAMSPDDDAPSFDIN) is disordered.

This sequence belongs to the enoyl-CoA hydratase/isomerase family.

The protein operates within mycotoxin biosynthesis. In terms of biological role, enoyl-CoA hydratase; part of the gene clusters that mediate the biosynthesis of the host-selective toxins (HSTs) AK-toxins responsible for Japanese pear black spot disease by the Japanese pear pathotype. AK-toxins are esters of 9,10-epoxy 8-hydroxy 9-methyldecatrienoic acid (EDA). On cellular level, AK-toxins affect plasma membrane of susceptible cells and cause a sudden increase in loss of K(+) after a few minutes of toxin treatment. The acyl-CoA ligase AKT1, the hydrolase AKT2 and enoyl-CoA hydratase AKT3 are all involved in the biosynthesis of the AK-, AF- and ACT-toxin common 9,10-epoxy-8-hydroxy-9-methyl-decatrienoic acid (EDA) structural moiety. Part of the EDA biosynthesis occurs in the peroxisome since these 3 enzymes are localized in peroxisomes. The exact roles of the 3 enzymes, as well as of additional AK-toxin clusters enzymes, including AKT4, AKT6 and AKTS1, have still to be elucidated. The Cytochrome P450 monooxygenase AKT7 on the other side functions to limit production of EDA and AK-toxin, probably via the catalysis of a side reaction of EDA or its precursor. The chain is Enoyl-CoA hydratase AKT6-1 from Alternaria alternata (Alternaria rot fungus).